A 95-amino-acid polypeptide reads, in one-letter code: MQITDVRVRKIAAEGKMKAIVSVTFDNEFVVHDIKVIEGQNGLFIAMPSRKTPDGEYKDIAHPINTETREKIQKSIIEEYERAKMEEESSEKVQE.

Belongs to the SpoVG family.

In terms of biological role, could be involved in septation. This chain is Putative septation protein SpoVG, found in Clostridium botulinum (strain ATCC 19397 / Type A).